The sequence spans 477 residues: RNA pseudouridine synthase 4, mitochondrial (477 aa).

Residues 1–43 (MAKWRLATATLRRQLQSSSPTISTFKNPTKALSAAAHQSTRSY) constitute a mitochondrion transit peptide. The tract at residues 34 to 55 (AAAHQSTRSYSTTQTDDSRGKW) is disordered. A compositionally biased stretch (polar residues) spans 36–48 (AHQSTRSYSTTQT). The region spanning 90–175 (TTALRWILRC…AKKESFQCSD (86 aa)) is the S4 RNA-binding domain. Asp236 is an active-site residue.

It belongs to the pseudouridine synthase RluA family.

The protein resides in the mitochondrion. It carries out the reaction a uridine in RNA = a pseudouridine in RNA. This is RNA pseudouridine synthase 4, mitochondrial from Arabidopsis thaliana (Mouse-ear cress).